The following is a 77-amino-acid chain: DNA-directed RNA polymerase subunit epsilon (77 aa).

It belongs to the RNA polymerase subunit epsilon family. As to quaternary structure, RNAP is composed of a core of 2 alpha, a beta and a beta' subunit. The core is associated with a delta subunit, and at least one of epsilon or omega. When a sigma factor is associated with the core the holoenzyme is formed, which can initiate transcription.

The enzyme catalyses RNA(n) + a ribonucleoside 5'-triphosphate = RNA(n+1) + diphosphate. A non-essential component of RNA polymerase (RNAP). This chain is DNA-directed RNA polymerase subunit epsilon, found in Lactobacillus delbrueckii subsp. bulgaricus (strain ATCC 11842 / DSM 20081 / BCRC 10696 / JCM 1002 / NBRC 13953 / NCIMB 11778 / NCTC 12712 / WDCM 00102 / Lb 14).